A 460-amino-acid polypeptide reads, in one-letter code: Chromosomal replication initiator protein DnaA (460 aa).

Residues 1-84 are domain I, interacts with DnaA modulators; the sequence is MAVSLWQQCI…RFDIGSRPSA (84 aa). The domain II stretch occupies residues 84–123; sequence AKKPEPAPVAAVRVPNPQTKASVGTSFNTTEPVVNANHRS. Positions 124–340 are domain III, AAA+ region; that stretch reads NINPTYQFDN…GALNRVIANA (217 aa). ATP is bound by residues glycine 168, glycine 170, lysine 171, and threonine 172. The domain IV, binds dsDNA stretch occupies residues 341 to 460; sequence NFTGRPITID…YANLIRTLSS (120 aa).

It belongs to the DnaA family. In terms of assembly, oligomerizes as a right-handed, spiral filament on DNA at oriC.

The protein localises to the cytoplasm. Functionally, plays an essential role in the initiation and regulation of chromosomal replication. ATP-DnaA binds to the origin of replication (oriC) to initiate formation of the DNA replication initiation complex once per cell cycle. Binds the DnaA box (a 9 base pair repeat at the origin) and separates the double-stranded (ds)DNA. Forms a right-handed helical filament on oriC DNA; dsDNA binds to the exterior of the filament while single-stranded (ss)DNA is stabiized in the filament's interior. The ATP-DnaA-oriC complex binds and stabilizes one strand of the AT-rich DNA unwinding element (DUE), permitting loading of DNA polymerase. After initiation quickly degrades to an ADP-DnaA complex that is not apt for DNA replication. Binds acidic phospholipids. This chain is Chromosomal replication initiator protein DnaA, found in Shewanella sp. (strain MR-7).